A 183-amino-acid chain; its full sequence is Apo-citrate lyase phosphoribosyl-dephospho-CoA transferase (183 aa).

The protein belongs to the CitX family.

It carries out the reaction apo-[citrate lyase ACP] + 2'-(5''-triphospho-alpha-D-ribosyl)-3'-dephospho-CoA = holo-[citrate lyase ACP] + diphosphate. Its function is as follows. Transfers 2-(5''-triphosphoribosyl)-3'-dephosphocoenzyme-A on a serine residue to the apo-acyl carrier protein (gamma chain) of the citrate lyase to yield holo-acyl carrier protein. The protein is Apo-citrate lyase phosphoribosyl-dephospho-CoA transferase of Escherichia coli (strain SMS-3-5 / SECEC).